A 238-amino-acid polypeptide reads, in one-letter code: Nucleoside diphosphate kinase III, chloroplastic/mitochondrial (238 aa).

A chloroplast and mitochondrion-targeting transit peptide spans M1–A85. ATP is bound by residues K96, F144, R172, T178, R189, and N199. H202 functions as the Pros-phosphohistidine intermediate in the catalytic mechanism.

The protein belongs to the NDK family. As to quaternary structure, homohexamer. The cofactor is Mg(2+).

Its subcellular location is the plastid. It is found in the chloroplast thylakoid lumen. It localises to the mitochondrion intermembrane space. It carries out the reaction a 2'-deoxyribonucleoside 5'-diphosphate + ATP = a 2'-deoxyribonucleoside 5'-triphosphate + ADP. It catalyses the reaction a ribonucleoside 5'-diphosphate + ATP = a ribonucleoside 5'-triphosphate + ADP. Its function is as follows. Major role in the synthesis of nucleoside triphosphates other than ATP. The ATP gamma phosphate is transferred to the NDP beta phosphate via a ping-pong mechanism, using a phosphorylated active-site intermediate. Shows the highest specificity towards GDP. The sequence is that of Nucleoside diphosphate kinase III, chloroplastic/mitochondrial (NDPK3) from Arabidopsis thaliana (Mouse-ear cress).